A 419-amino-acid chain; its full sequence is L-rhamnose isomerase (419 aa).

Residues His262, Asp294, and Asp296 each contribute to the Mn(2+) site.

Belongs to the rhamnose isomerase family. Homotetramer. It depends on Mn(2+) as a cofactor.

The protein resides in the cytoplasm. It catalyses the reaction L-rhamnopyranose = L-rhamnulose. It participates in carbohydrate degradation; L-rhamnose degradation; glycerone phosphate from L-rhamnose: step 1/3. In terms of biological role, catalyzes the interconversion of L-rhamnose and L-rhamnulose. The sequence is that of L-rhamnose isomerase from Salmonella gallinarum (strain 287/91 / NCTC 13346).